The primary structure comprises 273 residues: Anthranilate synthase beta subunit 2, chloroplastic (273 aa).

The transit peptide at 1-36 (MAATTLYNSCLLQPKYGFTTRRLNQSLVNSLTNPTR) directs the protein to the chloroplast. Residues 71–270 (PIIVIDNYDS…IKLVEKKESE (200 aa)) form the Glutamine amidotransferase type-1 domain. The active-site Nucleophile is Cys149. Active-site residues include His244 and Glu246.

Heterotetramer consisting of two non-identical subunits: a beta subunit and a large alpha subunit.

It is found in the plastid. Its subcellular location is the chloroplast. It catalyses the reaction chorismate + L-glutamine = anthranilate + pyruvate + L-glutamate + H(+). It functions in the pathway amino-acid biosynthesis; L-tryptophan biosynthesis; L-tryptophan from chorismate: step 1/5. With respect to regulation, feedback inhibition by tryptophan. In terms of biological role, part of a heterotetrameric complex that catalyzes the two-step biosynthesis of anthranilate, an intermediate in the biosynthesis of L-tryptophan. In the first step, the glutamine-binding beta subunit of anthranilate synthase (AS) provides the glutamine amidotransferase activity which generates ammonia as a substrate that, along with chorismate, is used in the second step, catalyzed by the large alpha subunit of AS to produce anthranilate. This is Anthranilate synthase beta subunit 2, chloroplastic (ASB2) from Arabidopsis thaliana (Mouse-ear cress).